A 947-amino-acid polypeptide reads, in one-letter code: Bifunctional glutamine synthetase adenylyltransferase/adenylyl-removing enzyme (947 aa).

Residues 1-440 are adenylyl removase; it reads MTPLSSPLSQ…VFNELIGDDE (440 aa). Positions 450–947 are adenylyl transferase; it reads SEPWREVWQD…ASWRKWLVAV (498 aa).

This sequence belongs to the GlnE family. Requires Mg(2+) as cofactor.

It catalyses the reaction [glutamine synthetase]-O(4)-(5'-adenylyl)-L-tyrosine + phosphate = [glutamine synthetase]-L-tyrosine + ADP. The enzyme catalyses [glutamine synthetase]-L-tyrosine + ATP = [glutamine synthetase]-O(4)-(5'-adenylyl)-L-tyrosine + diphosphate. Involved in the regulation of glutamine synthetase GlnA, a key enzyme in the process to assimilate ammonia. When cellular nitrogen levels are high, the C-terminal adenylyl transferase (AT) inactivates GlnA by covalent transfer of an adenylyl group from ATP to specific tyrosine residue of GlnA, thus reducing its activity. Conversely, when nitrogen levels are low, the N-terminal adenylyl removase (AR) activates GlnA by removing the adenylyl group by phosphorolysis, increasing its activity. The regulatory region of GlnE binds the signal transduction protein PII (GlnB) which indicates the nitrogen status of the cell. This Salmonella paratyphi B (strain ATCC BAA-1250 / SPB7) protein is Bifunctional glutamine synthetase adenylyltransferase/adenylyl-removing enzyme.